The chain runs to 20 residues: Conotoxin PnMLKM-D0211 (20 aa).

A propeptide spanning residues 1 to 3 (VKR) is cleaved from the precursor. Disulfide bonds link Cys-4-Cys-18, Cys-5-Cys-14, and Cys-10-Cys-17. Pro-16 bears the 4-hydroxyproline mark. At Trp-19 the chain carries Tryptophan amide.

Belongs to the conotoxin M superfamily. Expressed by the venom duct.

Its subcellular location is the secreted. The chain is Conotoxin PnMLKM-D0211 from Conus pennaceus (Feathered cone).